The primary structure comprises 119 residues: MAEHNELGKKGEELAVEYLRLKEYEILELNYRYQKAEVDIIAKRGNTLIAAEVKTRSTPEFGNPQDFVKPKQIQQLVKAVNHYVEEGELDVEVRFDIIAIIKNKAGTKIEHIQDAFFYF.

This sequence belongs to the UPF0102 family.

The sequence is that of UPF0102 protein GFO_3098 from Christiangramia forsetii (strain DSM 17595 / CGMCC 1.15422 / KT0803) (Gramella forsetii).